Reading from the N-terminus, the 123-residue chain is Testis-expressed protein 12 (123 aa).

The disordered stretch occupies residues 1–41; the sequence is MMANHLVKPDSRNCKRARELEPQVSDSPQVSSLGKSESSLS. Residues 7-21 show a composition bias toward basic and acidic residues; it reads VKPDSRNCKRARELE. The span at 31–41 shows a compositional bias: low complexity; sequence SSLGKSESSLS.

In terms of assembly, interacts with SYCE2. Testis (at protein level). Detected in ovary. Expressed in both male and female germ cells.

It is found in the chromosome. In terms of biological role, component of the transverse central element of synaptonemal complexes (SCS), formed between homologous chromosomes during meiotic prophase. Requires SYCP1 in order to be incorporated into the central element. This is Testis-expressed protein 12 (Tex12) from Mus musculus (Mouse).